Reading from the N-terminus, the 314-residue chain is MAPPQVLAFGLLLAAATATFAAAQEECVCENYKLAVNCFVNNNRQCQCTSVGAQNTVICSKLAAKCLVMKAEMNGSKLGRRAKPEGALQNNDGLYDPDCDESGLFKAKQCNGTSMCWCVNTAGVRRTDKDTEITCSERVRTYWIIIELKHKAREKPYDSKSLRTALQKEITTRYQLDPKFITSILYENNVITIDLVQNSSQKTQNDVDIADVAYYFEKDVKGESLFHSKKMDLTVNGEQLDLDPGQTLIYYVDEKAPEFSMQGLKAGVIAVIVVVVIAVVAGIVVLVISRKKRMAKYEKAEIKEMGEMHRELNA.

A signal peptide spans 1 to 23; sequence MAPPQVLAFGLLLAAATATFAAA. Topologically, residues 24–265 are extracellular; sequence QEECVCENYK…APEFSMQGLK (242 aa). Disulfide bonds link Cys27-Cys46, Cys29-Cys59, Cys38-Cys48, Cys66-Cys99, Cys110-Cys116, and Cys118-Cys135. One can recognise a Thyroglobulin type-1 domain in the interval 63 to 135; that stretch reads AAKCLVMKAE…RTDKDTEITC (73 aa). An N-linked (GlcNAc...) asparagine; partial glycan is attached at Asn74. A glycan (N-linked (GlcNAc...) asparagine) is linked at Asn111. Asn198 is a glycosylation site (N-linked (GlcNAc...) asparagine). Residues 266–288 form a helical membrane-spanning segment; the sequence is AGVIAVIVVVVIAVVAGIVVLVI. At 289-314 the chain is on the cytoplasmic side; that stretch reads SRKKRMAKYEKAEIKEMGEMHRELNA.

Belongs to the EPCAM family. Monomer. Interacts with phosphorylated CLDN7. Hyperglycosylated in carcinoma tissue as compared with autologous normal epithelia. Glycosylation at Asn-198 is crucial for protein stability. In terms of tissue distribution, highly and selectively expressed by undifferentiated rather than differentiated embryonic stem cells (ESC). Levels rapidly diminish as soon as ESC's differentiate (at protein levels). Expressed in almost all epithelial cell membranes but not on mesodermal or neural cell membranes. Found on the surface of adenocarcinoma.

The protein localises to the lateral cell membrane. It localises to the cell junction. It is found in the tight junction. May act as a physical homophilic interaction molecule between intestinal epithelial cells (IECs) and intraepithelial lymphocytes (IELs) at the mucosal epithelium for providing immunological barrier as a first line of defense against mucosal infection. Plays a role in embryonic stem cells proliferation and differentiation. Up-regulates the expression of FABP5, MYC and cyclins A and E. This is Epithelial cell adhesion molecule (EPCAM) from Homo sapiens (Human).